A 200-amino-acid polypeptide reads, in one-letter code: A-type ATP synthase subunit E (200 aa).

Belongs to the V-ATPase E subunit family. As to quaternary structure, has multiple subunits with at least A(3), B(3), C, D, E, F, H, I and proteolipid K(x).

It localises to the cell membrane. In terms of biological role, component of the A-type ATP synthase that produces ATP from ADP in the presence of a proton gradient across the membrane. This is A-type ATP synthase subunit E from Methanopyrus kandleri (strain AV19 / DSM 6324 / JCM 9639 / NBRC 100938).